We begin with the raw amino-acid sequence, 786 residues long: LPS-assembly protein LptD (786 aa).

The signal sequence occupies residues 1–24 (MKKRIPTLLATMIASALYSHQGLA). Cystine bridges form between Cys31/Cys726 and Cys173/Cys727.

This sequence belongs to the LptD family. As to quaternary structure, component of the lipopolysaccharide transport and assembly complex. Interacts with LptE and LptA. Contains two intramolecular disulfide bonds.

The protein resides in the cell outer membrane. Functionally, together with LptE, is involved in the assembly of lipopolysaccharide (LPS) at the surface of the outer membrane. This chain is LPS-assembly protein LptD, found in Salmonella choleraesuis (strain SC-B67).